The primary structure comprises 432 residues: D-amino acid dehydrogenase (432 aa).

3 to 17 lines the FAD pocket; it reads VVILGSGVVGVTSAW.

This sequence belongs to the DadA oxidoreductase family. The cofactor is FAD.

It catalyses the reaction a D-alpha-amino acid + A + H2O = a 2-oxocarboxylate + AH2 + NH4(+). It participates in amino-acid degradation; D-alanine degradation; NH(3) and pyruvate from D-alanine: step 1/1. Oxidative deamination of D-amino acids. The chain is D-amino acid dehydrogenase from Salmonella paratyphi C (strain RKS4594).